A 152-amino-acid polypeptide reads, in one-letter code: SsrA-binding protein (152 aa).

It belongs to the SmpB family.

The protein resides in the cytoplasm. Its function is as follows. Required for rescue of stalled ribosomes mediated by trans-translation. Binds to transfer-messenger RNA (tmRNA), required for stable association of tmRNA with ribosomes. tmRNA and SmpB together mimic tRNA shape, replacing the anticodon stem-loop with SmpB. tmRNA is encoded by the ssrA gene; the 2 termini fold to resemble tRNA(Ala) and it encodes a 'tag peptide', a short internal open reading frame. During trans-translation Ala-aminoacylated tmRNA acts like a tRNA, entering the A-site of stalled ribosomes, displacing the stalled mRNA. The ribosome then switches to translate the ORF on the tmRNA; the nascent peptide is terminated with the 'tag peptide' encoded by the tmRNA and targeted for degradation. The ribosome is freed to recommence translation, which seems to be the essential function of trans-translation. This Gloeobacter violaceus (strain ATCC 29082 / PCC 7421) protein is SsrA-binding protein.